The following is a 303-amino-acid chain: tRNA pseudouridine synthase B (303 aa).

Aspartate 47 (nucleophile) is an active-site residue.

It belongs to the pseudouridine synthase TruB family. Type 1 subfamily.

The enzyme catalyses uridine(55) in tRNA = pseudouridine(55) in tRNA. Responsible for synthesis of pseudouridine from uracil-55 in the psi GC loop of transfer RNAs. The chain is tRNA pseudouridine synthase B from Roseobacter denitrificans (strain ATCC 33942 / OCh 114) (Erythrobacter sp. (strain OCh 114)).